We begin with the raw amino-acid sequence, 218 residues long: Probable transaldolase (218 aa).

The Schiff-base intermediate with substrate role is filled by K87.

The protein belongs to the transaldolase family. Type 3B subfamily.

The protein resides in the cytoplasm. The enzyme catalyses D-sedoheptulose 7-phosphate + D-glyceraldehyde 3-phosphate = D-erythrose 4-phosphate + beta-D-fructose 6-phosphate. It functions in the pathway carbohydrate degradation; pentose phosphate pathway; D-glyceraldehyde 3-phosphate and beta-D-fructose 6-phosphate from D-ribose 5-phosphate and D-xylulose 5-phosphate (non-oxidative stage): step 2/3. Functionally, transaldolase is important for the balance of metabolites in the pentose-phosphate pathway. This is Probable transaldolase from Parabacteroides distasonis (strain ATCC 8503 / DSM 20701 / CIP 104284 / JCM 5825 / NCTC 11152).